A 166-amino-acid polypeptide reads, in one-letter code: Phosphopantetheine adenylyltransferase (166 aa).

Ser9 contacts substrate. ATP is bound by residues 9–10 and His17; that span reads SF. 3 residues coordinate substrate: Lys41, Leu74, and Lys88. ATP-binding positions include 89–91, Glu99, and 123–129; these read GLR and YIHLSST.

This sequence belongs to the bacterial CoaD family. Homohexamer. Mg(2+) is required as a cofactor.

It localises to the cytoplasm. The catalysed reaction is (R)-4'-phosphopantetheine + ATP + H(+) = 3'-dephospho-CoA + diphosphate. Its pathway is cofactor biosynthesis; coenzyme A biosynthesis; CoA from (R)-pantothenate: step 4/5. Its function is as follows. Reversibly transfers an adenylyl group from ATP to 4'-phosphopantetheine, yielding dephospho-CoA (dPCoA) and pyrophosphate. The protein is Phosphopantetheine adenylyltransferase of Pseudarthrobacter chlorophenolicus (strain ATCC 700700 / DSM 12829 / CIP 107037 / JCM 12360 / KCTC 9906 / NCIMB 13794 / A6) (Arthrobacter chlorophenolicus).